The chain runs to 381 residues: Alkanesulfonate monooxygenase (381 aa).

This sequence belongs to the SsuD family. In terms of assembly, homotetramer.

The enzyme catalyses an alkanesulfonate + FMNH2 + O2 = an aldehyde + FMN + sulfite + H2O + 2 H(+). Catalyzes the desulfonation of aliphatic sulfonates. In Escherichia coli O9:H4 (strain HS), this protein is Alkanesulfonate monooxygenase.